The chain runs to 62 residues: Photosystem II reaction center protein Z (62 aa).

2 helical membrane passes run 8–28 (AVFA…VVLA) and 41–61 (FSGA…NSFI).

It belongs to the PsbZ family. PSII is composed of 1 copy each of membrane proteins PsbA, PsbB, PsbC, PsbD, PsbE, PsbF, PsbH, PsbI, PsbJ, PsbK, PsbL, PsbM, PsbT, PsbY, PsbZ, Psb30/Ycf12, at least 3 peripheral proteins of the oxygen-evolving complex and a large number of cofactors. It forms dimeric complexes.

It localises to the plastid. Its subcellular location is the chloroplast thylakoid membrane. May control the interaction of photosystem II (PSII) cores with the light-harvesting antenna, regulates electron flow through the 2 photosystem reaction centers. PSII is a light-driven water plastoquinone oxidoreductase, using light energy to abstract electrons from H(2)O, generating a proton gradient subsequently used for ATP formation. This chain is Photosystem II reaction center protein Z, found in Anthoceros angustus (Hornwort).